Here is a 449-residue protein sequence, read N- to C-terminus: Cysteine--tRNA ligase (449 aa).

Cys30 is a Zn(2+) binding site. Residues 32–42 (PTVYDRAHLGN) carry the 'HIGH' region motif. Zn(2+)-binding residues include Cys210, His235, and Glu239. The 'KMSKS' region signature appears at 268 to 272 (KMSKS). Residue Lys271 coordinates ATP.

It belongs to the class-I aminoacyl-tRNA synthetase family. In terms of assembly, monomer. The cofactor is Zn(2+).

Its subcellular location is the cytoplasm. It catalyses the reaction tRNA(Cys) + L-cysteine + ATP = L-cysteinyl-tRNA(Cys) + AMP + diphosphate. The sequence is that of Cysteine--tRNA ligase from Acidiphilium cryptum (strain JF-5).